Here is a 251-residue protein sequence, read N- to C-terminus: Maleate isomerase (251 aa).

Substrate-binding positions include asparagine 14, cysteine 76–valine 78, tyrosine 133, and asparagine 163. The active-site Nucleophile is cysteine 76. The residue at position 76 (cysteine 76) is an S-(2-succinyl)cysteine. The active-site Proton donor is cysteine 194. Substrate is bound at residue valine 195–glutamine 196.

Belongs to the maleate isomerase family. Homodimer.

It carries out the reaction maleate = fumarate. In terms of biological role, catalyzes cis-trans isomerization of the C2-C3 double bond in maleate to yield fumarate. Shows a strict specificity for maleate, with no activity detected toward structurally related substrates including citraconate, mesaconate, dimethylmaleate, and maleamide. The polypeptide is Maleate isomerase (Nocardia farcinica (strain IFM 10152)).